A 214-amino-acid chain; its full sequence is Probable chorismate pyruvate-lyase (214 aa).

Residues arginine 74, leucine 112, and glutamate 173 each contribute to the substrate site. Residues 183–214 (AAPENTGAGGTRLPRRIDTHHTPSKQEERPES) are disordered. Residues 197–214 (RRIDTHHTPSKQEERPES) show a composition bias toward basic and acidic residues.

It belongs to the UbiC family.

Its subcellular location is the cytoplasm. It carries out the reaction chorismate = 4-hydroxybenzoate + pyruvate. It participates in cofactor biosynthesis; ubiquinone biosynthesis. Its function is as follows. Removes the pyruvyl group from chorismate, with concomitant aromatization of the ring, to provide 4-hydroxybenzoate (4HB) for the ubiquinone pathway. This chain is Probable chorismate pyruvate-lyase, found in Cupriavidus metallidurans (strain ATCC 43123 / DSM 2839 / NBRC 102507 / CH34) (Ralstonia metallidurans).